A 20-amino-acid polypeptide reads, in one-letter code: Non-specific lipid-transfer protein (20 aa).

The protein belongs to the plant LTP family.

Plant non-specific lipid-transfer proteins transfer phospholipids as well as galactolipids across membranes. May play a role in wax or cutin deposition in the cell walls of expanding epidermal cells and certain secretory tissues. This chain is Non-specific lipid-transfer protein, found in Citrus sinensis (Sweet orange).